The sequence spans 895 residues: Protein translocase subunit SecA (895 aa).

Residues Gln89, 107–111 (GEGKT), and Asp502 contribute to the ATP site. Disordered stretches follow at residues 560 to 579 (RRID…PGRT) and 848 to 884 (AAPA…CGSG). 4 residues coordinate Zn(2+): Cys879, Cys881, Cys890, and His891.

Belongs to the SecA family. Monomer and homodimer. Part of the essential Sec protein translocation apparatus which comprises SecA, SecYEG and auxiliary proteins SecDF-YajC and YidC. Zn(2+) is required as a cofactor.

It localises to the cell inner membrane. It is found in the cytoplasm. The catalysed reaction is ATP + H2O + cellular proteinSide 1 = ADP + phosphate + cellular proteinSide 2.. Its function is as follows. Part of the Sec protein translocase complex. Interacts with the SecYEG preprotein conducting channel. Has a central role in coupling the hydrolysis of ATP to the transfer of proteins into and across the cell membrane, serving both as a receptor for the preprotein-SecB complex and as an ATP-driven molecular motor driving the stepwise translocation of polypeptide chains across the membrane. This chain is Protein translocase subunit SecA, found in Ruegeria sp. (strain TM1040) (Silicibacter sp.).